A 95-amino-acid chain; its full sequence is Aspartyl/glutamyl-tRNA(Asn/Gln) amidotransferase subunit C (95 aa).

This sequence belongs to the GatC family. As to quaternary structure, heterotrimer of A, B and C subunits.

The catalysed reaction is L-glutamyl-tRNA(Gln) + L-glutamine + ATP + H2O = L-glutaminyl-tRNA(Gln) + L-glutamate + ADP + phosphate + H(+). It catalyses the reaction L-aspartyl-tRNA(Asn) + L-glutamine + ATP + H2O = L-asparaginyl-tRNA(Asn) + L-glutamate + ADP + phosphate + 2 H(+). Functionally, allows the formation of correctly charged Asn-tRNA(Asn) or Gln-tRNA(Gln) through the transamidation of misacylated Asp-tRNA(Asn) or Glu-tRNA(Gln) in organisms which lack either or both of asparaginyl-tRNA or glutaminyl-tRNA synthetases. The reaction takes place in the presence of glutamine and ATP through an activated phospho-Asp-tRNA(Asn) or phospho-Glu-tRNA(Gln). This is Aspartyl/glutamyl-tRNA(Asn/Gln) amidotransferase subunit C from Pseudomonas fluorescens (strain SBW25).